A 154-amino-acid chain; its full sequence is Protein X (154 aa).

The interval 28 to 48 (RTLPGSLGAVPPPSSSAVPAD) is disordered. Over residues 30–46 (LPGSLGAVPPPSSSAVP) the composition is skewed to low complexity. The mitochondrial targeting sequence stretch occupies residues 68–117 (PCALRFTSARRMETTVNAPWSLPTVLHKRTLGLSGRSMTWIEDYIKDCVF).

The protein belongs to the orthohepadnavirus protein X family. As to quaternary structure, may form homodimer. May interact with host CEBPA, CFLAR, CREB1, DDB1, E4F1, HBXIP, HSPD1/HSP60, NFKBIA, POLR2E and SMAD4. Interacts with host SMC5-SMC6 complex and induces its degradation. Interacts with host TRPC4AP; leading to prevent ubiquitination of TRPC4AP. Interacts with host PLSCR1; this interaction promotes ubiquitination and degradation of HBx and impairs HBx-mediated cell proliferation. Post-translationally, a fraction may be phosphorylated in insect cells and HepG2 cells, a human hepatoblastoma cell line. Phosphorylated in vitro by host protein kinase C or mitogen-activated protein kinase. N-acetylated in insect cells.

It localises to the host cytoplasm. The protein resides in the host nucleus. The protein localises to the host mitochondrion. Multifunctional protein that plays a role in silencing host antiviral defenses and promoting viral transcription. Does not seem to be essential for HBV infection. May be directly involved in development of cirrhosis and liver cancer (hepatocellular carcinoma). Most of cytosolic activities involve modulation of cytosolic calcium. The effect on apoptosis is controversial depending on the cell types in which the studies have been conducted. May induce apoptosis by localizing in mitochondria and causing loss of mitochondrial membrane potential. May also modulate apoptosis by binding host CFLAR, a key regulator of the death-inducing signaling complex (DISC). Promotes viral transcription by using the host E3 ubiquitin ligase DDB1 to target the SMC5-SMC6 complex to proteasomal degradation. This host complex would otherwise bind to viral episomal DNA, and prevents its transcription. Moderately stimulates transcription of many different viral and cellular transcription elements. Promoters and enhancers stimulated by HBx contain DNA binding sites for NF-kappa-B, AP-1, AP-2, c-EBP, ATF/CREB, or the calcium-activated factor NF-AT. In Homo sapiens (Human), this protein is Protein X.